The sequence spans 152 residues: 3-hydroxyacyl-[acyl-carrier-protein] dehydratase FabZ (152 aa).

H58 is an active-site residue.

Belongs to the thioester dehydratase family. FabZ subfamily.

It is found in the cytoplasm. It carries out the reaction a (3R)-hydroxyacyl-[ACP] = a (2E)-enoyl-[ACP] + H2O. Its function is as follows. Involved in unsaturated fatty acids biosynthesis. Catalyzes the dehydration of short chain beta-hydroxyacyl-ACPs and long chain saturated and unsaturated beta-hydroxyacyl-ACPs. The chain is 3-hydroxyacyl-[acyl-carrier-protein] dehydratase FabZ from Prochlorococcus marinus (strain MIT 9312).